Reading from the N-terminus, the 395-residue chain is Altered inheritance of mitochondria protein 39, mitochondrial (395 aa).

The helical transmembrane segment at 156 to 176 (QIWSAIFGGIFGVILGYSLIY) threads the bilayer.

This sequence belongs to the AIM39 family.

The protein localises to the mitochondrion membrane. This is Altered inheritance of mitochondria protein 39, mitochondrial (AIM39) from Saccharomyces cerevisiae (strain RM11-1a) (Baker's yeast).